The primary structure comprises 173 residues: uncharacterized protein (173 aa).

Residues 1-11 (MLCAKNKKDPK) show a composition bias toward basic and acidic residues. Residues 1–173 (MLCAKNKKDP…EKMEKSEKAY (173 aa)) form a disordered region. Polar residues predominate over residues 17–41 (FSETSKVQNVQNTQPKPAAPSQMSI). 2 stretches are compositionally biased toward basic and acidic residues: residues 56–109 (KSVE…KADN) and 120–144 (AKKE…EAKK). The span at 145-156 (KESRRQKKMRNK) shows a compositional bias: basic residues. Residues 157–173 (NSKEGSVEKMEKSEKAY) are compositionally biased toward basic and acidic residues.

This is an uncharacterized protein from Caenorhabditis elegans.